Consider the following 437-residue polypeptide: Glycogen synthase (437 aa).

Lys-15 is a binding site for ADP-alpha-D-glucose.

This sequence belongs to the glycosyltransferase 1 family. Bacterial/plant glycogen synthase subfamily.

It carries out the reaction [(1-&gt;4)-alpha-D-glucosyl](n) + ADP-alpha-D-glucose = [(1-&gt;4)-alpha-D-glucosyl](n+1) + ADP + H(+). Its pathway is glycan biosynthesis; glycogen biosynthesis. In terms of biological role, synthesizes alpha-1,4-glucan chains using ADP-glucose. This is Glycogen synthase from Thermus thermophilus (strain ATCC BAA-163 / DSM 7039 / HB27).